A 284-amino-acid polypeptide reads, in one-letter code: uncharacterized protein (284 aa).

This is an uncharacterized protein from Acanthamoeba polyphaga (Amoeba).